A 1337-amino-acid chain; its full sequence is Activated Cdc42 kinase-like (1337 aa).

Ser-71 is subject to Phosphoserine. Residues 133–399 (ISVNKQLGTG…GEIYDQLPDM (267 aa)) form the Protein kinase domain. ATP contacts are provided by residues 139–147 (LGTGEFGIV) and Lys-164. Residue Asp-260 is the Proton acceptor of the active site. Tyr-291 and Tyr-292 each carry phosphotyrosine. The 62-residue stretch at 399-460 (MKPEQLKAVV…NPSNTVAFLE (62 aa)) folds into the SH3 domain. The CRIB domain maps to 488–502 (ISKPQNDFKHTGHVG). The interval 714–739 (SGDTNGNKHGHGLLPTLSKKKSSGTV) is disordered. Residues Ser-764 and Ser-778 each carry the phosphoserine modification. The interval 786–822 (RFPHLSNNGSGDKSGGLGTSGSAHTPTHGNASPFPKK) is disordered. The span at 805–815 (SGSAHTPTHGN) shows a compositional bias: polar residues. Residues Ser-831, Ser-918, and Ser-924 each carry the phosphoserine modification. Disordered regions lie at residues 906-969 (AGLS…TSTK) and 1024-1045 (PSGMRRPSRPSEREYENMPTVG). A compositionally biased stretch (pro residues) spans 947–957 (PESPNPIPLPP).

It belongs to the protein kinase superfamily. Tyr protein kinase family.

The catalysed reaction is L-tyrosyl-[protein] + ATP = O-phospho-L-tyrosyl-[protein] + ADP + H(+). In terms of biological role, likely to act as a downstream effector of Cdc42 during dorsal closure, acting in a kinase independent manner with the other ACK family member Ack to positively regulate expression of the myosin zip by promoting the endocytosis of Egfr in the amnioserosa (AS). This Drosophila melanogaster (Fruit fly) protein is Activated Cdc42 kinase-like.